The chain runs to 435 residues: MQDSLTLKPVDYIQGKINIPGSKSISNRVLLLSALSNGKTILKNLLYSDDIKYMLKALLKLGIFYKLDKKKSKCTIYGISDAFSVKNKIKLFLGNAGTAMRPLLAILSLKKNKIILTGEKRMKERPIHHLVDSLRQGGANITYKNKKKFPPLYIKGGFKGGKIFIDGSISSQFLSSLLMAAPLAELDTEIIVKNQLVSKPYINLTINLMEKFGISVSILNDYKHFYIKGNQKYISPKKYYIESDLSSATYFLAAAAIKGGSIQINGIQKKSIQGDINFIKILKQMGVSIQWKKNSVICKKNKLLGITVDCNHIPDAAMTIAILGVFSKKKVYIKNIYNWRVKETDRIYAMSTELKKIGARVITGKDYIKVYPVKNFIHAKINTYNDHRIAMCFSLISLSGTSVTLLNPKCVNKTFPSFFKNFYSICHYSNINKNI.

3-phosphoshikimate-binding residues include Lys23, Ser24, and Arg28. Lys23 contacts phosphoenolpyruvate. Positions 97 and 125 each coordinate phosphoenolpyruvate. Residues Ser170, Ser171, Gln172, Ser198, Asp315, Asn338, and Lys342 each contribute to the 3-phosphoshikimate site. Position 172 (Gln172) interacts with phosphoenolpyruvate. The active-site Proton acceptor is the Asp315. Arg346, Arg388, and Lys413 together coordinate phosphoenolpyruvate.

Belongs to the EPSP synthase family. Monomer.

The protein resides in the cytoplasm. The enzyme catalyses 3-phosphoshikimate + phosphoenolpyruvate = 5-O-(1-carboxyvinyl)-3-phosphoshikimate + phosphate. The protein operates within metabolic intermediate biosynthesis; chorismate biosynthesis; chorismate from D-erythrose 4-phosphate and phosphoenolpyruvate: step 6/7. In terms of biological role, catalyzes the transfer of the enolpyruvyl moiety of phosphoenolpyruvate (PEP) to the 5-hydroxyl of shikimate-3-phosphate (S3P) to produce enolpyruvyl shikimate-3-phosphate and inorganic phosphate. In Buchnera aphidicola subsp. Cinara cedri (strain Cc), this protein is 3-phosphoshikimate 1-carboxyvinyltransferase.